Consider the following 197-residue polypeptide: UPF0314 protein NGR_c32320 (197 aa).

The next 3 helical transmembrane spans lie at 16–36, 66–86, and 152–172; these read WIWL…QHLM, WYTP…YLLL, and LPVA…GWII.

The protein belongs to the UPF0314 family.

It localises to the cell membrane. The chain is UPF0314 protein NGR_c32320 from Sinorhizobium fredii (strain NBRC 101917 / NGR234).